Reading from the N-terminus, the 225-residue chain is UPF0758 protein BCQ_4241 (225 aa).

The 123-residue stretch at 103-225 (SIRSPEDCAR…FVSLKEKGHI (123 aa)) folds into the MPN domain. His174, His176, and Asp187 together coordinate Zn(2+). The short motif at 174–187 (HNHPSGDPAPSRED) is the JAMM motif element.

This sequence belongs to the UPF0758 family.

The polypeptide is UPF0758 protein BCQ_4241 (Bacillus cereus (strain Q1)).